Consider the following 353-residue polypeptide: Delta-aminolevulinic acid dehydratase (353 aa).

Residue lysine 221 is the Schiff-base intermediate with substrate of the active site. 2 residues coordinate 5-aminolevulinate: arginine 231 and lysine 244. Glutamate 260 provides a ligand contact to Mg(2+). The Schiff-base intermediate with substrate role is filled by lysine 275. Residues serine 301 and tyrosine 340 each contribute to the 5-aminolevulinate site.

This sequence belongs to the ALAD family. As to quaternary structure, homooctamer. Mg(2+) serves as cofactor.

The catalysed reaction is 2 5-aminolevulinate = porphobilinogen + 2 H2O + H(+). It participates in porphyrin-containing compound metabolism; protoporphyrin-IX biosynthesis; coproporphyrinogen-III from 5-aminolevulinate: step 1/4. Functionally, catalyzes an early step in the biosynthesis of tetrapyrroles. Binds two molecules of 5-aminolevulinate per subunit, each at a distinct site, and catalyzes their condensation to form porphobilinogen. Required for nodule development. This Bradyrhizobium diazoefficiens (strain JCM 10833 / BCRC 13528 / IAM 13628 / NBRC 14792 / USDA 110) protein is Delta-aminolevulinic acid dehydratase (hemB).